Reading from the N-terminus, the 412-residue chain is Glutamate-pyruvate aminotransferase AlaC (412 aa).

Lys-244 carries the post-translational modification N6-(pyridoxal phosphate)lysine.

The protein belongs to the class-I pyridoxal-phosphate-dependent aminotransferase family. As to quaternary structure, homodimer. It depends on pyridoxal 5'-phosphate as a cofactor.

It is found in the cytoplasm. The enzyme catalyses L-alanine + 2-oxoglutarate = pyruvate + L-glutamate. The protein operates within amino-acid biosynthesis; L-alanine biosynthesis. Its function is as follows. Involved in the biosynthesis of alanine. Catalyzes the transamination of pyruvate by glutamate, leading to the formation of L-alanine and 2-oxoglutarate. Is also able to catalyze the reverse reaction. The protein is Glutamate-pyruvate aminotransferase AlaC of Escherichia coli (strain K12).